The following is a 242-amino-acid chain: Transcriptional regulatory protein btr (242 aa).

Residues 158–231 (MRSEQRLAAF…QREVRLIDLP (74 aa)) enclose the HTH crp-type domain. The segment at residues 191-210 (REEIGNYLGLTLETVSRLFS) is a DNA-binding region (H-T-H motif).

May regulate gene expression in response to changes in oxygen levels or to changes in the redox potential of the bacterial environment. This is Transcriptional regulatory protein btr (btr) from Bordetella pertussis (strain Tohama I / ATCC BAA-589 / NCTC 13251).